The chain runs to 159 residues: Eukaryotic translation initiation factor 5A-5 (159 aa).

The span at 1–12 shows a compositional bias: basic and acidic residues; the sequence is MSDEEHHFESKA. Residues 1-23 are disordered; sequence MSDEEHHFESKADAGASKTYPQQ. Lys52 is subject to Hypusine.

It belongs to the eIF-5A family. Lys-52 undergoes hypusination, a unique post-translational modification that consists in the addition of a butylamino group from spermidine to lysine side chain, leading to the formation of the unusual amino acid hypusine. eIF-5As are the only known proteins to undergo this modification, which is essential for their function.

Its function is as follows. Translation factor that promotes translation elongation and termination, particularly upon ribosome stalling at specific amino acid sequence contexts. Binds between the exit (E) and peptidyl (P) site of the ribosome and promotes rescue of stalled ribosome: specifically required for efficient translation of polyproline-containing peptides as well as other motifs that stall the ribosome. Acts as a ribosome quality control (RQC) cofactor by joining the RQC complex to facilitate peptidyl transfer during CAT tailing step. The chain is Eukaryotic translation initiation factor 5A-5 (EIF5A5) from Solanum tuberosum (Potato).